Consider the following 419-residue polypeptide: UDP-N-acetylglucosamine 1-carboxyvinyltransferase (419 aa).

Residue 22–23 (KN) participates in phosphoenolpyruvate binding. Residue Arg-92 coordinates UDP-N-acetyl-alpha-D-glucosamine. The active-site Proton donor is Cys-116. Cys-116 is subject to 2-(S-cysteinyl)pyruvic acid O-phosphothioketal. Residues 121-125 (RPIDL), Asp-306, and Ile-328 each bind UDP-N-acetyl-alpha-D-glucosamine.

It belongs to the EPSP synthase family. MurA subfamily.

The protein resides in the cytoplasm. The catalysed reaction is phosphoenolpyruvate + UDP-N-acetyl-alpha-D-glucosamine = UDP-N-acetyl-3-O-(1-carboxyvinyl)-alpha-D-glucosamine + phosphate. It functions in the pathway cell wall biogenesis; peptidoglycan biosynthesis. Its function is as follows. Cell wall formation. Adds enolpyruvyl to UDP-N-acetylglucosamine. Target for the antibiotic fosfomycin. Involved in heteroresistance to antibiotic fosfomycin. Heteroresistance is the ability of a clonal population to grow one or several subpopulations at a frequency of 10(-7) to 10(-3) in the presence of a higher antibiotic concentration than that predicted to be effective by measurement of the minimum inhibitory concentration (MIC). The protein is UDP-N-acetylglucosamine 1-carboxyvinyltransferase of Streptococcus pneumoniae serotype 2 (strain D39 / NCTC 7466).